The following is a 91-amino-acid chain: Large ribosomal subunit protein bL27 (91 aa).

Residues 1–21 (MAHKKSGGSSRNGRDSAGRRL) form a disordered region.

Belongs to the bacterial ribosomal protein bL27 family.

This Phenylobacterium zucineum (strain HLK1) protein is Large ribosomal subunit protein bL27.